A 254-amino-acid polypeptide reads, in one-letter code: Tryptophan synthase alpha chain (254 aa).

Active-site proton acceptor residues include Glu48 and Asp59.

This sequence belongs to the TrpA family. Tetramer of two alpha and two beta chains.

It catalyses the reaction (1S,2R)-1-C-(indol-3-yl)glycerol 3-phosphate + L-serine = D-glyceraldehyde 3-phosphate + L-tryptophan + H2O. It participates in amino-acid biosynthesis; L-tryptophan biosynthesis; L-tryptophan from chorismate: step 5/5. In terms of biological role, the alpha subunit is responsible for the aldol cleavage of indoleglycerol phosphate to indole and glyceraldehyde 3-phosphate. This is Tryptophan synthase alpha chain from Desulfotalea psychrophila (strain LSv54 / DSM 12343).